The sequence spans 247 residues: Golgi-associated RAB2 interactor protein 5A (247 aa).

The span at 1–16 (MGPPLWPDLQEPPPPG) shows a compositional bias: pro residues. 2 disordered regions span residues 1 to 22 (MGPP…SQIR) and 60 to 92 (GDIA…PTGR).

This sequence belongs to the GARIN family. Interacts (via N-terminus) with RAB2B (in GTP-bound form).

Its subcellular location is the golgi apparatus. In terms of biological role, RAB2B effector protein which promotes cytosolic DNA-induced innate immune responses. Regulates IFN responses against DNA viruses by regulating the CGAS-STING signaling axis. The sequence is that of Golgi-associated RAB2 interactor protein 5A from Homo sapiens (Human).